A 75-amino-acid polypeptide reads, in one-letter code: MEEIPFENAMARLEEIVDLMNQPSTSLDSSLKLYEEADALMRICESRIRKAEDRVRELSEKRNETLLSEEESCTH.

The protein belongs to the XseB family. In terms of assembly, heterooligomer composed of large and small subunits.

The protein resides in the cytoplasm. It catalyses the reaction Exonucleolytic cleavage in either 5'- to 3'- or 3'- to 5'-direction to yield nucleoside 5'-phosphates.. Its function is as follows. Bidirectionally degrades single-stranded DNA into large acid-insoluble oligonucleotides, which are then degraded further into small acid-soluble oligonucleotides. The polypeptide is Exodeoxyribonuclease 7 small subunit (Chlamydia caviae (strain ATCC VR-813 / DSM 19441 / 03DC25 / GPIC) (Chlamydophila caviae)).